We begin with the raw amino-acid sequence, 198 residues long: Recombination protein RecR (198 aa).

The segment at 58-73 (CSVCGNFTDKDPCAIC) adopts a C4-type zinc-finger fold. Residues 81–175 (SIICVIEQPK…KVTRIAHGVP (95 aa)) enclose the Toprim domain.

It belongs to the RecR family.

In terms of biological role, may play a role in DNA repair. It seems to be involved in an RecBC-independent recombinational process of DNA repair. It may act with RecF and RecO. In Clostridium botulinum (strain ATCC 19397 / Type A), this protein is Recombination protein RecR.